Reading from the N-terminus, the 425-residue chain is UPF0597 protein Moth_1414 (425 aa).

This sequence belongs to the UPF0597 family.

In Moorella thermoacetica (strain ATCC 39073 / JCM 9320), this protein is UPF0597 protein Moth_1414.